A 78-amino-acid chain; its full sequence is Small ribosomal subunit protein bS18 (78 aa).

Belongs to the bacterial ribosomal protein bS18 family. Part of the 30S ribosomal subunit. Forms a tight heterodimer with protein bS6.

Functionally, binds as a heterodimer with protein bS6 to the central domain of the 16S rRNA, where it helps stabilize the platform of the 30S subunit. The protein is Small ribosomal subunit protein bS18 of Frankia casuarinae (strain DSM 45818 / CECT 9043 / HFP020203 / CcI3).